A 421-amino-acid chain; its full sequence is Testin (421 aa).

Residues 92–199 (MILTNPVAAK…GDVKLPREMD (108 aa)) enclose the PET domain. The interval 133 to 164 (EKQPVAGSEGAQYRKKQLAKQLPAHDQDPSKC) is disordered. The segment covering 155-164 (PAHDQDPSKC) has biased composition (basic and acidic residues). LIM zinc-binding domains follow at residues 234-297 (YSCY…CDSE), 299-359 (PRCA…NHAV), and 362-421 (QGCH…KMMS).

Belongs to the prickle / espinas / testin family. Interacts via LIM domain 1 with ZYX. Interacts (via LIM domain 3) with ENAH and VASP. Interacts with ALKBH4, talin, actin, alpha-actinin, GRIP1 and PXN. Interacts (via LIM domain 2) with ACTL7A (via N-terminus). Heterodimer with ACTL7A; the heterodimer interacts with ENAH to form a heterotrimer.

It localises to the cytoplasm. The protein localises to the cell junction. The protein resides in the focal adhesion. In terms of biological role, scaffold protein that may play a role in cell adhesion, cell spreading and in the reorganization of the actin cytoskeleton. Plays a role in the regulation of cell proliferation. May act as a tumor suppressor. The polypeptide is Testin (TES) (Mustela putorius furo (European domestic ferret)).